Here is an 804-residue protein sequence, read N- to C-terminus: Ribonucleoside-diphosphate reductase large subunit (804 aa).

Positions 1–92 constitute an ATP-cone domain; sequence MYVLNRKGEE…TDNLHKNTSD (92 aa). ATP-binding positions include 5-6, 11-17, T53, and D57; these read NR and EDISFDQ. S216 contacts GDP. A disulfide bridge connects residues C217 and C442. Residues 225–227, K242, R255, and 262–263 contribute to the dTTP site; these read DSI and RG. N425 lines the GDP pocket. N425 acts as the Proton acceptor in catalysis. The Cysteine radical intermediate role is filled by C427. GDP is bound by residues E429 and 603–606; that span reads TAST. Catalysis depends on E429, which acts as the Proton acceptor.

The protein belongs to the ribonucleoside diphosphate reductase large chain family. As to quaternary structure, heterodimer of a large and a small subunit.

The catalysed reaction is a 2'-deoxyribonucleoside 5'-diphosphate + [thioredoxin]-disulfide + H2O = a ribonucleoside 5'-diphosphate + [thioredoxin]-dithiol. Its activity is regulated as follows. Under complex allosteric control mediated by deoxynucleoside triphosphates and ATP binding to separate specificity and activation sites on the large subunit. The type of nucleotide bound at the specificity site determines substrate preference. It seems probable that ATP makes the enzyme reduce CDP and UDP, dGTP favors ADP reduction and dTTP favors GDP reduction. Stimulated by ATP and inhibited by dATP binding to the activity site. In terms of biological role, provides the precursors necessary for DNA synthesis. Catalyzes the biosynthesis of deoxyribonucleotides from the corresponding ribonucleotides. The polypeptide is Ribonucleoside-diphosphate reductase large subunit (RNR1) (Plasmodium falciparum (isolate FCR-3 / Gambia)).